The following is a 353-amino-acid chain: Heterogeneous nuclear ribonucleoprotein D0 (353 aa).

Residues 1 to 89 (MSEEQFGGDG…SSPRHTEAAT (89 aa)) are disordered. Ser-2 carries the post-translational modification N-acetylserine. A compositionally biased stretch (low complexity) spans 11–42 (AAAAATAAVGGSAGEQEGAMVAAAQGAAAAAG). Gly residues predominate over residues 43–56 (SGSGGGSAPGGTEG). Basic and acidic residues predominate over residues 62-71 (EGAKIDASKN). Position 69 is a phosphoserine (Ser-69). Lys-70 is covalently cross-linked (Glycyl lysine isopeptide (Lys-Gly) (interchain with G-Cter in SUMO2)). Phosphoserine is present on residues Ser-78, Ser-80, and Ser-81. The residue at position 89 (Thr-89) is a Phosphothreonine. RRM domains lie at 95–177 (WKMF…KTKE) and 180–259 (KKIF…MSKE). Lys-117 bears the N6-methyllysine mark. Thr-125 carries the post-translational modification Phosphothreonine. Residue Lys-127 forms a Glycyl lysine isopeptide (Lys-Gly) (interchain with G-Cter in SUMO2) linkage. At Lys-163 the chain carries N6-acetyllysine. The residue at position 188 (Ser-188) is a Phosphoserine. Thr-191 is modified (phosphothreonine). Lys-195 is covalently cross-linked (Glycyl lysine isopeptide (Lys-Gly) (interchain with G-Cter in SUMO2)). An N6-acetyllysine mark is found at Lys-241 and Lys-249. Position 269 is a phosphoserine (Ser-269). Residues Arg-270, Arg-276, Arg-278, and Arg-280 each carry the omega-N-methylarginine modification. Arg-343 carries the post-translational modification Asymmetric dimethylarginine; alternate. Arg-343 is subject to Dimethylated arginine; alternate. At Arg-343 the chain carries Omega-N-methylarginine; alternate.

In terms of assembly, identified in a IGF2BP1-dependent mRNP granule complex containing untranslated mRNAs. Part of a complex associated with the FOS mCRD domain and consisting of PABPC1, PAIP1, CSDE1/UNR and SYNCRIP. Interacts with IGF2BP2. Interacts with GTPBP1. Interacts with EIF4G1; the interaction requires RNA. Interacts with EIF3B and RPS3. Methylated by PRMT1, in an insulin-dependent manner. The PRMT1-mediated methylation regulates its phosphorylation. In terms of processing, arg-343 is dimethylated, probably to asymmetric dimethylarginine.

It localises to the nucleus. The protein resides in the cytoplasm. Its function is as follows. Binds with high affinity to RNA molecules that contain AU-rich elements (AREs) found within the 3'-UTR of many proto-oncogenes and cytokine mRNAs. Also binds to double- and single-stranded DNA sequences in a specific manner and functions a transcription factor. Each of the RNA-binding domains specifically can bind solely to a single-stranded non-monotonous 5'-UUAG-3' sequence and also weaker to the single-stranded 5'-TTAGGG-3' telomeric DNA repeat. Binds RNA oligonucleotides with 5'-UUAGGG-3' repeats more tightly than the telomeric single-stranded DNA 5'-TTAGGG-3' repeats. Binding of RRM1 to DNA inhibits the formation of DNA quadruplex structure which may play a role in telomere elongation. May be involved in translationally coupled mRNA turnover. Implicated with other RNA-binding proteins in the cytoplasmic deadenylation/translational and decay interplay of the FOS mRNA mediated by the major coding-region determinant of instability (mCRD) domain. May play a role in the regulation of the rhythmic expression of circadian clock core genes. Directly binds to the 3'UTR of CRY1 mRNA and induces CRY1 rhythmic translation. May also be involved in the regulation of PER2 translation. This Rattus norvegicus (Rat) protein is Heterogeneous nuclear ribonucleoprotein D0 (Hnrnpd).